Reading from the N-terminus, the 238-residue chain is Uridylate kinase (238 aa).

12–15 (KLSG) lines the ATP pocket. An involved in allosteric activation by GTP region spans residues 20–25 (GDEGFG). Glycine 54 is a UMP binding site. ATP-binding residues include glycine 55 and arginine 59. Residues aspartate 74 and 135 to 142 (TGSPFFTT) each bind UMP. Residues threonine 162, tyrosine 168, and aspartate 171 each coordinate ATP.

It belongs to the UMP kinase family. As to quaternary structure, homohexamer.

The protein resides in the cytoplasm. The catalysed reaction is UMP + ATP = UDP + ADP. It functions in the pathway pyrimidine metabolism; CTP biosynthesis via de novo pathway; UDP from UMP (UMPK route): step 1/1. Allosterically activated by GTP. Inhibited by UTP. In terms of biological role, catalyzes the reversible phosphorylation of UMP to UDP. In Histophilus somni (strain 129Pt) (Haemophilus somnus), this protein is Uridylate kinase.